A 447-amino-acid chain; its full sequence is MIKIKKGLDLPIAGAPVQTIQDGPAIHHVALLGEEYVGMRPSMLVQEGDQVKKGQALFEDKKNPGVLFTAPASGKISAINRGERRVLQSVVIEVEGDEQIPFEHYAAEELNQLSDEQVQHHLLTSGLWTALRTRPFSKTPVPGSRPRAIFISAMDTQPLAADPQVIIATESEAFNHGLTVLTRLTDGKVHVCHAAGQAVTRHTNTQVTYNEFSGPHPAGLVGTHIHFLEPVSQTKMVWHVGYQDVIAIGKLFTRGELCTDRIVALAGPQVNQPILLRTRLGASLSELTAGKLKEGDNRIISGSVLSGTAFSATHGYLGRFHQQVSVIREGREKELFGWVMPGRDKYSITRTTLGHFFKRKLFAFSTDMHGGERAMVPIGNYERVMPLDILATHLLRDLLAGDTDSAQALGCLELDEEDLALCTFVCPGKYEYGPVLRDILTQIEQEG.

It belongs to the NqrA family. As to quaternary structure, composed of six subunits; NqrA, NqrB, NqrC, NqrD, NqrE and NqrF.

The enzyme catalyses a ubiquinone + n Na(+)(in) + NADH + H(+) = a ubiquinol + n Na(+)(out) + NAD(+). Its function is as follows. NQR complex catalyzes the reduction of ubiquinone-1 to ubiquinol by two successive reactions, coupled with the transport of Na(+) ions from the cytoplasm to the periplasm. NqrA to NqrE are probably involved in the second step, the conversion of ubisemiquinone to ubiquinol. This Yersinia pestis protein is Na(+)-translocating NADH-quinone reductase subunit A.